The primary structure comprises 447 residues: MKPVIALVGRPNVGKSTLFNRLTRSRDALVADMPGLTRDRHYGEGRVGERPFIAIDTGGFEPVAKEGIVAEMAKQTRQAVVEADVVIFIVDGRLGLAPQDRVIADYLRKTGRRILLAVNKAEGMKYTAVATDFYELGLGDPRAISSAHGDGVRELVDEALDLAFAERPELAEAAEGHDHGTRIAIVGRPNVGKSTLVNALIGEERVIAFDMPGTTRDAIYVDFERNGKPYTLIDTAGLRKRGKVFEAIEKFSVVKTLQSIADANVVVLLLDAQQDISDQDAHIAGFIVESGRALVIGVNKWDGLDGHARDRIKHDMERKLQFLSFANVHYISAKQRTGIGALMKSVDDAYAAAMVKLPTPKLTRVLQEAVEFQQPRRAGVSRPKLRYAHQGGSNPPIVVIHGNALSNIPETYRRFLEGRFRDAFQLKGTPLRIEFRTNKNPYAQSNE.

EngA-type G domains are found at residues Pro3 to Arg167 and Thr181 to Met354. GTP contacts are provided by residues Gly9–Ser16, Asp56–Phe60, Asn119–Glu122, Gly187–Ser194, Asp234–Leu238, and Asn299–Asp302. The KH-like domain maps to Val355 to Lys439.

The protein belongs to the TRAFAC class TrmE-Era-EngA-EngB-Septin-like GTPase superfamily. EngA (Der) GTPase family. Associates with the 50S ribosomal subunit.

Functionally, GTPase that plays an essential role in the late steps of ribosome biogenesis. The sequence is that of GTPase Der from Ralstonia nicotianae (strain ATCC BAA-1114 / GMI1000) (Ralstonia solanacearum).